A 212-amino-acid polypeptide reads, in one-letter code: 2,3-bisphosphoglycerate-dependent phosphoglycerate mutase (212 aa).

Substrate contacts are provided by residues R9–N16, T22–G23, R61, E88–Y91, K99, R115–R116, and G159–N160. The active-site Tele-phosphohistidine intermediate is H10. The Proton donor/acceptor role is filled by E88.

Belongs to the phosphoglycerate mutase family. BPG-dependent PGAM subfamily. In terms of assembly, homodimer.

The catalysed reaction is (2R)-2-phosphoglycerate = (2R)-3-phosphoglycerate. It participates in carbohydrate degradation; glycolysis; pyruvate from D-glyceraldehyde 3-phosphate: step 3/5. In terms of biological role, catalyzes the interconversion of 2-phosphoglycerate and 3-phosphoglycerate. In Methylorubrum extorquens (strain CM4 / NCIMB 13688) (Methylobacterium extorquens), this protein is 2,3-bisphosphoglycerate-dependent phosphoglycerate mutase.